A 213-amino-acid polypeptide reads, in one-letter code: Heavy metal-binding protein HIP (213 aa).

The C1q domain occupies 80 to 213 (FKSHHVAFSA…MSTFTGFMLH (134 aa)).

As to expression, pallium, gill and liver.

It localises to the secreted. Binds heavy metals. May function as a carrier of divalent cations in plasma. In Mytilus edulis (Blue mussel), this protein is Heavy metal-binding protein HIP.